A 202-amino-acid polypeptide reads, in one-letter code: Ribosomal RNA small subunit methyltransferase G (202 aa).

Residues G75, F80, 125–126 (VQ), and R139 each bind S-adenosyl-L-methionine.

This sequence belongs to the methyltransferase superfamily. RNA methyltransferase RsmG family.

It is found in the cytoplasm. Functionally, specifically methylates the N7 position of a guanine in 16S rRNA. This Mesomycoplasma hyopneumoniae (strain J / ATCC 25934 / NCTC 10110) (Mycoplasma hyopneumoniae) protein is Ribosomal RNA small subunit methyltransferase G.